The sequence spans 131 residues: Small ribosomal subunit protein uS8 (131 aa).

The protein belongs to the universal ribosomal protein uS8 family. As to quaternary structure, part of the 30S ribosomal subunit. Contacts proteins S5 and S12.

Its function is as follows. One of the primary rRNA binding proteins, it binds directly to 16S rRNA central domain where it helps coordinate assembly of the platform of the 30S subunit. This Burkholderia ambifaria (strain MC40-6) protein is Small ribosomal subunit protein uS8.